A 158-amino-acid chain; its full sequence is UPF0145 protein Psyc_1853 (158 aa).

Residues 113–122 (IYQSSNQPPS) show a composition bias toward polar residues. The interval 113-158 (IYQSSNQPPSHHSGHSQYEEPVPSAAQPSTTAQANDDLPRFNPFGE) is disordered.

It belongs to the UPF0145 family.

The polypeptide is UPF0145 protein Psyc_1853 (Psychrobacter arcticus (strain DSM 17307 / VKM B-2377 / 273-4)).